A 373-amino-acid polypeptide reads, in one-letter code: MDFTTTEAAQDLGGLVDTIVDAVCTPEHQRELDKLEQRFDRELWRKLIDAGILSSAAPESLGGDGFGVLEQVAVLVALGHQLAAVPYLESVVLAAGALARFGSPELQQGWGVSAVSGDRILTVALDGEMGEGPVQAAGTGHGYRLTGTRTQVGYGPVADAFLVPAETDSGAAVFLVAAGDPGVAVTALATTGLGSVGHLELNGAKVDAARRVGGTDVAVWLGTLSTLSRTAFQLGVLERGLQMTAEYARTREQFDRPIGSFQAVGQRLADGYIDVKGLRLTLTQAAWRVAEDSLASRECPQPADIDVATAGFWAAEAGHRVAHTIVHVHGGVGVDTDHPVHRYFLAAKQTEFALGGATGQLRRIGRELAETPA.

Arg-251, His-327, and Gly-331 together coordinate FAD.

It belongs to the acyl-CoA dehydrogenase family. In terms of assembly, heterotetramer (dimer of heterodimers) composed of FadE26 and FadE27. It depends on FAD as a cofactor.

The enzyme catalyses (25S)-3-oxocholest-4-en-26-oyl-CoA + A = 3-oxo-cholest-4,24-dien-26-oyl-CoA + AH2. Its pathway is steroid metabolism; cholesterol degradation. With respect to regulation, uncompetitively inhibited by high concentration of 3-OCS-CoA. Functionally, involved in the first cycle of side chain dehydrogenation in the beta-oxidation of cholesterol catabolism. It contributes partly to the virulence by increasing the efficiency of beta-oxidation. Catalyzes the dehydrogenation of acyl-CoA ester side chains of (25S)-3-oxo-cholest-4-en-26-oyl-CoA (3-OCS-CoA) to yield (24E)-3-oxo-cholest-4,24-dien-26-oyl-CoA. Also able to dehydrogenate steroyl-CoA such as 3-oxo-chol-4-en-24-oyl-CoA (3-OCO-CoA) as well as 3-oxo-4-pregnene-20-carboxyl-CoA (3-OPC-CoA). It dehydrogenates only (25S)-OCS-CoA diastereomer. This Mycobacterium tuberculosis (strain ATCC 25618 / H37Rv) protein is Acyl-CoA dehydrogenase FadE27 (fadE27).